The sequence spans 255 residues: Large ribosomal subunit protein uL4 (255 aa).

This sequence belongs to the universal ribosomal protein uL4 family. Part of the 50S ribosomal subunit.

Functionally, one of the primary rRNA binding proteins, this protein initially binds near the 5'-end of the 23S rRNA. It is important during the early stages of 50S assembly. It makes multiple contacts with different domains of the 23S rRNA in the assembled 50S subunit and ribosome. In terms of biological role, forms part of the polypeptide exit tunnel. The sequence is that of Large ribosomal subunit protein uL4 from Pyrococcus abyssi (strain GE5 / Orsay).